Reading from the N-terminus, the 103-residue chain is Regulator of rDNA transcription protein 1 (103 aa).

2 helical membrane passes run 9-33 (FLPS…WVLV) and 40-57 (VAFI…YTFF).

It is found in the membrane. Identified in a screen for mutants with decreased levels of rDNA transcription. This is Regulator of rDNA transcription protein 1 (RRT1) from Saccharomyces cerevisiae (strain ATCC 204508 / S288c) (Baker's yeast).